The primary structure comprises 1837 residues: Nucleoporin nup211 (1837 aa).

Coiled coils occupy residues 59–378 (EVNY…YDEI), 415–519 (YKQK…ELDL), and 559–625 (VFRN…QLRY). T650 is subject to Phosphothreonine. Coiled coils occupy residues 661-1163 (EQTS…NKLL), 1222-1637 (LDNR…ENTH), and 1675-1712 (KAKI…PEKT). Positions 1464–1521 (KDSNHQLQESASSDAEQITKEQFEQLKSEKERTEKELADSKNELEHLQSEAVDADGKT) are disordered. Polar residues predominate over residues 1468–1479 (HQLQESASSDAE). A compositionally biased stretch (basic and acidic residues) spans 1480–1521 (QITKEQFEQLKSEKERTEKELADSKNELEHLQSEAVDADGKT). Residue S1558 is modified to Phosphoserine. At T1560 the chain carries Phosphothreonine. S1563 carries the phosphoserine modification. Disordered stretches follow at residues 1602-1642 (EKEK…NIDD) and 1700-1837 (ENLN…KKAK). Residues 1617-1628 (KSQRIKELEEQA) are compositionally biased toward basic and acidic residues. 4 stretches are compositionally biased toward polar residues: residues 1700–1730 (ENLN…SKPT), 1753–1763 (KSLSARLQGTG), 1795–1814 (IATS…TAKS), and 1827–1837 (GGSSSNQKKAK).

The protein localises to the cytoplasm. The protein resides in the nucleus. Its function is as follows. Functions as a component of the nuclear pore complex (NPC). NPC components, collectively referred to as nucleoporins (NUPs), can play the role of both NPC structural components and of docking or interaction partners for transiently associated nuclear transport factors. Active directional transport is assured by both, a Phe-Gly (FG) repeat affinity gradient for these transport factors across the NPC and a transport cofactor concentration gradient across the nuclear envelope. The protein is Nucleoporin nup211 (nup211) of Schizosaccharomyces pombe (strain 972 / ATCC 24843) (Fission yeast).